Consider the following 35-residue polypeptide: Photosystem II reaction center protein T (35 aa).

Residues 3-23 (ALVYTFLLVGTLGIIFFAIFF) form a helical membrane-spanning segment.

It belongs to the PsbT family. In terms of assembly, PSII is composed of 1 copy each of membrane proteins PsbA, PsbB, PsbC, PsbD, PsbE, PsbF, PsbH, PsbI, PsbJ, PsbK, PsbL, PsbM, PsbT, PsbY, PsbZ, Psb30/Ycf12, at least 3 peripheral proteins of the oxygen-evolving complex and a large number of cofactors. It forms dimeric complexes.

Its subcellular location is the plastid. It localises to the chloroplast thylakoid membrane. In terms of biological role, found at the monomer-monomer interface of the photosystem II (PS II) dimer, plays a role in assembly and dimerization of PSII. PSII is a light-driven water plastoquinone oxidoreductase, using light energy to abstract electrons from H(2)O, generating a proton gradient subsequently used for ATP formation. The sequence is that of Photosystem II reaction center protein T from Zygnema circumcarinatum (Green alga).